The primary structure comprises 973 residues: MLQQNNEQLLNLLPDKMMEKTFNPTDIEQSLYTSWEEQGYFSPTGEGDSYSIAIPPPNVTGSLHMGHAFQQTIMDTLIRYQRMQGKNTLWQTGCDHAGIATQMVVERKIAAEEDKTRHDYGREGFIDKIWEWKEESGGTIGKQMRRLGNSIDWSRERFTMDDGMSEAVQEVFVRLFEDDLIYRGKRLVNWDPKFHTAISDLEVENKDKKGHMWHLRYPLANGAKTAEGLDYLVVATTRPETMLGDTGVAVNPEDPRYKDLIGKQVLLPLVNRLIPIVGDDHADMEKGTGCVKITPGHDFNDNEVGKRHALPQINILDKDAAILATAEVYDTKGEVCNAYDTGLPSEFAGMDRFVARKAIVAKFDELGLLVEVKDHDLVAPYGDRSGVIIEPLLTDQWYVRVEKLAGPAVDAVKDGQIEFVPKQYENMYFSWMNNIQDWCISRQLWWGHRIPAWYDENEKVYVGRTEEEVRANNDIAADMKLRQDDDVLDTWFSSALWTFSTLGWPKDTEDLKTFHPTDVLVTGFDIIFFWVARMIMMTMHFNKDENGKAQIPFKKIYMTGLIRDENGDKMSKSKGNVVDPLDMIDGISLEDLLQKRTGNMMQPKLAKKIEKLTRKEYPEGIEAHGTDALRFTLTSVATTGRDISWDMKRLEGYRNFTNKLWNASRYVMMNTEEFDCGQSSPEGKAGDMELSLADRWIIGQFEQTVKTVHEAFDTYRFDLASQALYEFTWNQFCDWYLELTKPVLFKENEAQQRGTRHTLVNVLEALLRLMHPIMPFITETIWQRVQPLSDFSKNGDSIMVQAFPQFDESKCDQQAIDDLEWVKQFIIAIRNIRGEMDISPSKELPVLLKNVNDNDQRRLDENEQFLSSLAKLESITVLADDEQGPASASAVVGDLSVLIPMAGLIDKEAELARLDKAIEKLEKEAGRVRGKLGNENFVSKAPAAVIEKEQAKLADAESTLAKILEQKIQIAAL.

The short motif at 57–67 (PNVTGSLHMGH) is the 'HIGH' region element. The short motif at 569–573 (KMSKS) is the 'KMSKS' region element. ATP is bound at residue lysine 572. Positions 901–970 (MAGLIDKEAE…AKILEQKIQI (70 aa)) form a coiled coil.

The protein belongs to the class-I aminoacyl-tRNA synthetase family. ValS type 1 subfamily. Monomer.

It is found in the cytoplasm. The catalysed reaction is tRNA(Val) + L-valine + ATP = L-valyl-tRNA(Val) + AMP + diphosphate. In terms of biological role, catalyzes the attachment of valine to tRNA(Val). As ValRS can inadvertently accommodate and process structurally similar amino acids such as threonine, to avoid such errors, it has a 'posttransfer' editing activity that hydrolyzes mischarged Thr-tRNA(Val) in a tRNA-dependent manner. This is Valine--tRNA ligase from Colwellia psychrerythraea (strain 34H / ATCC BAA-681) (Vibrio psychroerythus).